Here is a 247-residue protein sequence, read N- to C-terminus: 1-(5-phosphoribosyl)-5-[(5-phosphoribosylamino)methylideneamino] imidazole-4-carboxamide isomerase (247 aa).

Asp8 acts as the Proton acceptor in catalysis. Asp131 functions as the Proton donor in the catalytic mechanism.

It belongs to the HisA/HisF family.

Its subcellular location is the cytoplasm. The enzyme catalyses 1-(5-phospho-beta-D-ribosyl)-5-[(5-phospho-beta-D-ribosylamino)methylideneamino]imidazole-4-carboxamide = 5-[(5-phospho-1-deoxy-D-ribulos-1-ylimino)methylamino]-1-(5-phospho-beta-D-ribosyl)imidazole-4-carboxamide. It functions in the pathway amino-acid biosynthesis; L-histidine biosynthesis; L-histidine from 5-phospho-alpha-D-ribose 1-diphosphate: step 4/9. This chain is 1-(5-phosphoribosyl)-5-[(5-phosphoribosylamino)methylideneamino] imidazole-4-carboxamide isomerase, found in Methylobacillus flagellatus (strain ATCC 51484 / DSM 6875 / VKM B-1610 / KT).